We begin with the raw amino-acid sequence, 669 residues long: CoB--CoM heterodisulfide reductase iron-sulfur subunit A 1 (669 aa).

FAD is bound at residue 153–176; that stretch reads GGGIAGIQAALDLADQGFKVYLVE. Position 200 (Sec-200) is a non-standard amino acid, selenocysteine. 4 4Fe-4S ferredoxin-type domains span residues 239-270, 287-318, 584-613, and 617-646; these read KKPR…FDLG, LVYT…FDQE, ITAT…MVEK, and RVAE…LRYY. Residues Cys-249, Cys-252, Cys-255, Cys-259, Cys-296, Cys-299, Cys-302, Cys-306, Cys-593, Cys-596, Cys-599, Cys-603, Cys-626, Cys-629, Cys-632, and Cys-636 each contribute to the [4Fe-4S] cluster site.

The protein belongs to the HdrA family. As to quaternary structure, the ferredoxin:CoB-CoM heterodisulfide reductase is composed of three subunits; HdrA, HdrB and HdrC. [4Fe-4S] cluster serves as cofactor. It depends on FAD as a cofactor.

It functions in the pathway cofactor metabolism; coenzyme M-coenzyme B heterodisulfide reduction; coenzyme B and coenzyme M from coenzyme M-coenzyme B heterodisulfide: step 1/1. Part of a complex that catalyzes the reversible reduction of CoM-S-S-CoB to the thiol-coenzymes H-S-CoM (coenzyme M) and H-S-CoB (coenzyme B). This is CoB--CoM heterodisulfide reductase iron-sulfur subunit A 1 (hdrA1) from Methanopyrus kandleri (strain AV19 / DSM 6324 / JCM 9639 / NBRC 100938).